A 218-amino-acid chain; its full sequence is MRVILLGAPGAGKGTQAQFIKEQFNIPQISTGDMLRAAVKAGTPLGLEAKKVMDAGGLVSDDIILGLVKERITENDCANGFLFDGFPRTIPQAQSLVEQGVDIDFVVEIDVDDEEIIERLSGRRVHPASGRVYHTKYNPPKVEGKDDETGDELVQRDDDQEETVRKRLEVYQAQTRPLVDFYQDLATQGESNAPRYVRVAGVGSVDDIRDRVLSALKG.

10–15 (GAGKGT) serves as a coordination point for ATP. The NMP stretch occupies residues 30–59 (STGDMLRAAVKAGTPLGLEAKKVMDAGGLV). AMP contacts are provided by residues Thr31, Arg36, 57-59 (GLV), 85-88 (GFPR), and Gln92. The interval 122–159 (GRRVHPASGRVYHTKYNPPKVEGKDDETGDELVQRDDD) is LID. Residues Arg123 and 132–133 (VY) each bind ATP. A disordered region spans residues 139–160 (PPKVEGKDDETGDELVQRDDDQ). Residues Arg156 and Arg167 each coordinate AMP. ATP is bound at residue Gly203.

It belongs to the adenylate kinase family. Monomer.

The protein resides in the cytoplasm. It carries out the reaction AMP + ATP = 2 ADP. The protein operates within purine metabolism; AMP biosynthesis via salvage pathway; AMP from ADP: step 1/1. Functionally, catalyzes the reversible transfer of the terminal phosphate group between ATP and AMP. Plays an important role in cellular energy homeostasis and in adenine nucleotide metabolism. This is Adenylate kinase from Alcanivorax borkumensis (strain ATCC 700651 / DSM 11573 / NCIMB 13689 / SK2).